Consider the following 474-residue polypeptide: ATP synthase subunit beta (474 aa).

151–158 contacts ATP; that stretch reads GGAGVGKT.

It belongs to the ATPase alpha/beta chains family. As to quaternary structure, F-type ATPases have 2 components, CF(1) - the catalytic core - and CF(0) - the membrane proton channel. CF(1) has five subunits: alpha(3), beta(3), gamma(1), delta(1), epsilon(1). CF(0) has four main subunits: a(1), b(1), b'(1) and c(9-12).

Its subcellular location is the cell inner membrane. It carries out the reaction ATP + H2O + 4 H(+)(in) = ADP + phosphate + 5 H(+)(out). In terms of biological role, produces ATP from ADP in the presence of a proton gradient across the membrane. The catalytic sites are hosted primarily by the beta subunits. The chain is ATP synthase subunit beta from Jannaschia sp. (strain CCS1).